Here is a 653-residue protein sequence, read N- to C-terminus: Pentatricopeptide repeat-containing protein At3g14730 (653 aa).

14 PPR repeats span residues 59-93, 95-119, 125-159, 160-193, 194-224, 226-260, 261-295, 296-326, 327-361, 362-396, 401-431, 432-466, 467-497, and 503-537; these read NVAT…GFLD, SPRA…VLVF, DVFG…GILP, DKYT…GFDS, DCYV…LPDR, DSVL…GVGV, SRHT…GSGS, DIVV…MDER, DLFT…GIRP, DIVT…GLLN, NEFI…MRVK, DSAS…GVKP, DEIT…METV, and TSDH…DNPV. A type E motif region spans residues 538–613; it reads VWRSILSSCR…TPGCSWIVLK (76 aa). Residues 614–644 form a type E(+) motif region; sequence NGVHTFFTGNQTHPEFKSIHDWLSLVISHMH.

Belongs to the PPR family. PCMP-E subfamily.

This chain is Pentatricopeptide repeat-containing protein At3g14730 (PCMP-E31), found in Arabidopsis thaliana (Mouse-ear cress).